The sequence spans 246 residues: Chaperone protein SefB (246 aa).

The first 24 residues, 1 to 24 (MYILNKFIRRTVIFFFFCYLPIAS), serve as a signal peptide directing secretion. Cysteines 124 and 155 form a disulfide.

The protein belongs to the periplasmic pilus chaperone family.

The protein resides in the periplasm. In terms of biological role, required for the biogenesis of the SefA (SEF14) fimbria. The sequence is that of Chaperone protein SefB (sefB) from Salmonella enteritidis.